A 267-amino-acid polypeptide reads, in one-letter code: MHEHSLFAPVPAAQHHDLLQQLAGVTAMQPNRIYERRLVFKPYRKPGYLKPRPGGSQDVQAPEVQRLNKMLNGGLYHVQVVGEVKLTDFGTHPSTVDATMGGTDFGNQHQNEYDISNQSWRIEFKDIPDAGTGSAVTSRLISTSRVPYGDIVPVMKAWGYDYVSEYVLEGDMFILDDTVILLHRILNFPAKHHLQGLPAFYLPPLQEMVPLDSTGGYLLQASITVQDSGNPDLMKATTQRLLGLKEHLKSAVRLESADRLSLDTRVK.

It belongs to the Mediator complex subunit 18 family. Component of the Mediator complex.

The protein resides in the nucleus. Its function is as follows. Component of the Mediator complex, a coactivator involved in the regulated transcription of nearly all RNA polymerase II-dependent genes. Mediator functions as a bridge to convey information from gene-specific regulatory proteins to the basal RNA polymerase II transcription machinery. Mediator is recruited to promoters by direct interactions with regulatory proteins and serves as a scaffold for the assembly of a functional preinitiation complex with RNA polymerase II and the general transcription factors. In Coccidioides immitis (strain RS) (Valley fever fungus), this protein is Mediator of RNA polymerase II transcription subunit 18 (SRB5).